The following is a 658-amino-acid chain: Carnitine O-palmitoyltransferase 2, mitochondrial (658 aa).

The transit peptide at 1-25 (MVARLLLRSWSRGLAVGPGAPCRPL) directs the protein to the mitochondrion. The Mitochondrial matrix segment spans residues 26–178 (STGFEPSQYL…DLLEPEVFHL (153 aa)). At Lys69 the chain carries N6-succinyllysine. Position 79 is an N6-acetyllysine (Lys79). An N6-succinyllysine modification is found at Lys85. Positions 179–208 (NPAKSDTDTFKRFIRFVPSFLSWYGAYLVN) form an intramembrane region, note=Mitochondrial inner membrane. The Mitochondrial matrix segment spans residues 209-658 (AYPLDMSQYY…DALEGKMIKT (450 aa)). Residue Lys239 is modified to N6-acetyllysine; alternate. N6-succinyllysine; alternate is present on Lys239. The Proton acceptor role is filled by His372. Position 418 is an N6-acetyllysine; alternate (Lys418). The residue at position 418 (Lys418) is an N6-succinyllysine; alternate. 2 positions are modified to N6-succinyllysine: Lys424 and Lys439. Position 452–464 (452–464 (GREFLKKQKLSPD)) interacts with CoA. (R)-carnitine is bound by residues Tyr486, Ser488, and Thr499. Position 510 is an N6-acetyllysine; alternate (Lys510). Lys510 is modified (N6-succinyllysine; alternate).

This sequence belongs to the carnitine/choline acetyltransferase family.

The protein localises to the mitochondrion inner membrane. It catalyses the reaction (R)-carnitine + hexadecanoyl-CoA = O-hexadecanoyl-(R)-carnitine + CoA. The enzyme catalyses octanoyl-CoA + (R)-carnitine = O-octanoyl-(R)-carnitine + CoA. It carries out the reaction decanoyl-CoA + (R)-carnitine = O-decanoyl-(R)-carnitine + CoA. The catalysed reaction is dodecanoyl-CoA + (R)-carnitine = O-dodecanoyl-R-carnitine + CoA. It catalyses the reaction tetradecanoyl-CoA + (R)-carnitine = O-tetradecanoyl-(R)-carnitine + CoA. The enzyme catalyses (R)-carnitine + octadecanoyl-CoA = O-octadecanoyl-(R)-carnitine + CoA. It carries out the reaction eicosanoyl-CoA + (R)-carnitine = O-eicosanoyl-(R)-carnitine + CoA. The catalysed reaction is (9Z)-tetradecenoyl-CoA + (R)-carnitine = O-(9Z)-tetradecenoyl-(R)-carnitine + CoA. It catalyses the reaction (5Z)-tetradecenoyl-CoA + (R)-carnitine = O-(5Z)-tetradecenoyl-(R)-carnitine + CoA. The enzyme catalyses (R)-carnitine + (9Z)-octadecenoyl-CoA = O-(9Z)-octadecenoyl-(R)-carnitine + CoA. It carries out the reaction 4,8-dimethylnonanoyl-CoA + (R)-carnitine = O-4,8-dimethylnonanoyl-(R)-carnitine + CoA. It participates in lipid metabolism; fatty acid beta-oxidation. Involved in the intramitochondrial synthesis of acylcarnitines from accumulated acyl-CoA metabolites. Reconverts acylcarnitines back into the respective acyl-CoA esters that can then undergo beta-oxidation, an essential step for the mitochondrial uptake of long-chain fatty acids and their subsequent beta-oxidation in the mitochondrion. Active with medium (C8-C12) and long-chain (C14-C18) acyl-CoA esters. In Bos taurus (Bovine), this protein is Carnitine O-palmitoyltransferase 2, mitochondrial (CPT2).